Reading from the N-terminus, the 550-residue chain is Metal transporter Nramp4 (550 aa).

Residues 1–13 (MEEGAKIGREHEQ) show a composition bias toward basic and acidic residues. The interval 1–37 (MEEGAKIGREHEQQQQQHGRVNGSGRVAAVGGGSGGG) is disordered. The segment covering 14 to 29 (QQQQHGRVNGSGRVAA) has biased composition (low complexity). Transmembrane regions (helical) follow at residues 72–92 (FLAH…PSNL), 105–125 (SLLW…SLAA), 151–171 (LWLL…LGTA), 177–197 (LLHI…FLIL), 207–227 (MEFT…MELG), 255–275 (VAMF…SLVL), 292–312 (FFLL…VAIV), 354–374 (VYGV…SYAG), 388–408 (IIYL…CSIG), 416–436 (IINI…IPLI), 457–477 (IAWI…CTSF), and 492–512 (AIIS…LIYL).

Belongs to the NRAMP (TC 2.A.55) family.

It localises to the membrane. Probable metal transporter. This Oryza sativa subsp. japonica (Rice) protein is Metal transporter Nramp4 (NRAMP4).